Reading from the N-terminus, the 975-residue chain is Exportin-2 (975 aa).

In terms of domain architecture, Importin N-terminal spans 29-105 (AEKLLESTEL…KTLIVTLMLH (77 aa)).

This sequence belongs to the XPO2/CSE1 family. In terms of assembly, binds with high affinity to importin-alpha only in the presence of RanGTP.

The protein localises to the cytoplasm. The protein resides in the nucleus. Functionally, export receptor for importin alpha. Mediates importin-alpha re-export from the nucleus to the cytoplasm after import substrates have been released into the nucleoplasm. The sequence is that of Exportin-2 from Drosophila melanogaster (Fruit fly).